The following is a 423-amino-acid chain: Pentamidine resistance factor, mitochondrial (423 aa).

A helical transmembrane segment spans residues 199–219 (PVFFTLVFIFEEVSVLIFTFF).

Interacts with COX18. This interaction may be essential for its insertion into mitochondrial inner membrane.

The protein resides in the mitochondrion inner membrane. Functionally, probably involved in mitochondrial export. Confers resistance to the anti-pneumocystis carinii drug pentamidine. May act by the removal of pentamidine, or its damage targets, from the matrix by an active-transport mechanism. This Saccharomyces cerevisiae (strain ATCC 204508 / S288c) (Baker's yeast) protein is Pentamidine resistance factor, mitochondrial (PNT1).